Here is a 366-residue protein sequence, read N- to C-terminus: S-adenosylmethionine:tRNA ribosyltransferase-isomerase (366 aa).

This sequence belongs to the QueA family. As to quaternary structure, monomer.

It localises to the cytoplasm. The catalysed reaction is 7-aminomethyl-7-carbaguanosine(34) in tRNA + S-adenosyl-L-methionine = epoxyqueuosine(34) in tRNA + adenine + L-methionine + 2 H(+). Its pathway is tRNA modification; tRNA-queuosine biosynthesis. Transfers and isomerizes the ribose moiety from AdoMet to the 7-aminomethyl group of 7-deazaguanine (preQ1-tRNA) to give epoxyqueuosine (oQ-tRNA). The sequence is that of S-adenosylmethionine:tRNA ribosyltransferase-isomerase from Methylorubrum populi (strain ATCC BAA-705 / NCIMB 13946 / BJ001) (Methylobacterium populi).